Here is an 88-residue protein sequence, read N- to C-terminus: Small ribosomal subunit protein uS15c (88 aa).

Belongs to the universal ribosomal protein uS15 family. Part of the 30S ribosomal subunit.

The protein resides in the plastid. Its subcellular location is the chloroplast. This chain is Small ribosomal subunit protein uS15c (rps15), found in Marchantia polymorpha (Common liverwort).